A 178-amino-acid chain; its full sequence is uncharacterized protein (178 aa).

A helical transmembrane segment spans residues 7–29 (FFVIFSILWGSLFLFSIIGSLGT).

The protein localises to the membrane. This is an uncharacterized protein from Bacillus subtilis (strain 168).